A 520-amino-acid polypeptide reads, in one-letter code: MPGSLPLNAEACWPKDVGIVALEIYFPSQYVDQAELEKYDGVDAGKYTIGLGQARMGFCTDREDINSLCLTVVQKLMERNSLSYDCIGRLEVGTETIIDKSKSVKSNLMQLFEESGNTDIEGIDTTNACYGGTAAVFNAVNWIESSSWDGRYALVVAGDIAIYASGNARPTGGVGAVALLIGPNAPVIFDRGLRGTHMQHAYDFYKPDMLSEYPVVDGKLSIQCYLSALDRCYSVYRKKIRAQWQKEGKDKDFTLNDFGFMIFHSPYCKLVQKSLARMFLNDFLNDQNRDKNSIYSGLEAFGDVKLEDTYFDRDVEKAFMKASAELFNQKTKASLLVSNQNGNMYTSSVYGSLASVLAQYSPQQLAGKRIGVFSYGSGLAATLYSLKVTQDATPGSALDKITASLCDLKSRLDSRTCVAPDVFAENMKLREDTHHLANYIPQCSIDSLFEGTWYLVRVDEKHRRTYARRPSTNDHSLDEGVGLVHSNTATEHIPSPAKKVPRLPATSGEPESAVISNGEH.

Phosphoserine is present on Ser-4. 2 residues coordinate (3S)-3-hydroxy-3-methylglutaryl-CoA: Asp-43 and Ala-44. 44-46 (AGK) contributes to the CoA binding site. Lys-46 is subject to N6-acetyllysine. Residue Glu-95 is the Proton donor/acceptor of the active site. (3S)-3-hydroxy-3-methylglutaryl-CoA-binding residues include Cys-129, Asn-167, Thr-171, Ser-221, and His-264. Cys-129 functions as the Acyl-thioester intermediate in the catalytic mechanism. Residue Asn-167 coordinates CoA. Ser-221 is a binding site for CoA. The Proton donor/acceptor role is filled by His-264. 2 residues coordinate CoA: Lys-269 and Lys-273. Positions 273, 343, and 377 each coordinate (3S)-3-hydroxy-3-methylglutaryl-CoA. Lys-273 bears the N6-acetyllysine mark. Residues 487-520 (NTATEHIPSPAKKVPRLPATSGEPESAVISNGEH) are disordered. 2 positions are modified to phosphoserine: Ser-495 and Ser-516.

This sequence belongs to the thiolase-like superfamily. HMG-CoA synthase family. Homodimer.

The protein localises to the cytoplasm. It catalyses the reaction acetoacetyl-CoA + acetyl-CoA + H2O = (3S)-3-hydroxy-3-methylglutaryl-CoA + CoA + H(+). Its pathway is metabolic intermediate biosynthesis; (R)-mevalonate biosynthesis; (R)-mevalonate from acetyl-CoA: step 2/3. Catalyzes the condensation of acetyl-CoA with acetoacetyl-CoA to form HMG-CoA, which is converted by HMG-CoA reductase (HMGCR) into mevalonate, a precursor for cholesterol synthesis. The protein is Hydroxymethylglutaryl-CoA synthase, cytoplasmic of Rattus norvegicus (Rat).